We begin with the raw amino-acid sequence, 149 residues long: UPF0178 protein lwe1471 (149 aa).

This sequence belongs to the UPF0178 family.

The polypeptide is UPF0178 protein lwe1471 (Listeria welshimeri serovar 6b (strain ATCC 35897 / DSM 20650 / CCUG 15529 / CIP 8149 / NCTC 11857 / SLCC 5334 / V8)).